A 277-amino-acid chain; its full sequence is Protein EURL homolog (277 aa).

The disordered stretch occupies residues 173 to 201 (LGLWPGERPQNREQRDSRQRRHSGHSREE). Positions 197 to 229 (HSREELMRKNVEELRQLNEQLLLQIQNVFEELS) form a coiled coil.

Belongs to the EURL family.

Plays a role in cortical progenitor cell proliferation and differentiation. May promote dendritic spine development of post-migratory cortical projection neurons by modulating the beta-catenin signaling pathway. This is Protein EURL homolog from Danio rerio (Zebrafish).